The following is a 66-amino-acid chain: Large ribosomal subunit protein bL35 (66 aa).

The protein belongs to the bacterial ribosomal protein bL35 family.

The protein is Large ribosomal subunit protein bL35 of Brucella melitensis biotype 1 (strain ATCC 23456 / CCUG 17765 / NCTC 10094 / 16M).